We begin with the raw amino-acid sequence, 280 residues long: MLKNIIYSYITQLKNLLSKKLNVLCTFSAGQDSFFLLYCLIHIISNKNNKIKLQHNHHFLQSSNILSFWQCIKVASIFKIPLVINLLEINLANKDFMTENEARKWRYDSFLRNSLFQNEKPSIFIGHTGSDLLETFFWHFLRNSIIDYQLIKKKLLWNIPYYISNFSSVGYKNSSKVKIKLTNKKKKINCLINHNLMLNKAKKSFLKKDLTQLVLITRPLVNLHRQDIFLFRKNLKLPVITDKSNDNNYYYRNRIRNILFPIMRILFNKKTDKNLIKLFL.

An ATP-binding site is contributed by 28–33 (SAGQDS).

This sequence belongs to the tRNA(Ile)-lysidine synthase family.

It localises to the plastid. It carries out the reaction cytidine(34) in tRNA(Ile2) + L-lysine + ATP = lysidine(34) in tRNA(Ile2) + AMP + diphosphate + H(+). Its function is as follows. Ligates lysine onto the cytidine present at position 34 of the AUA codon-specific tRNA(Ile) that contains the anticodon CAU, in an ATP-dependent manner. Cytidine is converted to lysidine, thus changing the amino acid specificity of the tRNA from methionine to isoleucine. The polypeptide is tRNA(Ile)-lysidine synthase, plastid (tilS) (Helicosporidium sp. subsp. Simulium jonesii (Green alga)).